A 332-amino-acid chain; its full sequence is DNA-directed RNA polymerase subunit alpha (332 aa).

The alpha N-terminal domain (alpha-NTD) stretch occupies residues 1–234 (MIEYVIPKKL…NHLQIITDSL (234 aa)). The interval 264–332 (AVYSKKIDEL…KFGLSLKKGG (69 aa)) is alpha C-terminal domain (alpha-CTD).

The protein belongs to the RNA polymerase alpha chain family. Homodimer. The RNAP catalytic core consists of 2 alpha, 1 beta, 1 beta' and 1 omega subunit. When a sigma factor is associated with the core the holoenzyme is formed, which can initiate transcription.

It catalyses the reaction RNA(n) + a ribonucleoside 5'-triphosphate = RNA(n+1) + diphosphate. DNA-dependent RNA polymerase catalyzes the transcription of DNA into RNA using the four ribonucleoside triphosphates as substrates. The sequence is that of DNA-directed RNA polymerase subunit alpha from Pseudothermotoga lettingae (strain ATCC BAA-301 / DSM 14385 / NBRC 107922 / TMO) (Thermotoga lettingae).